A 373-amino-acid polypeptide reads, in one-letter code: D-amino-acid oxidase 3 (373 aa).

A signal peptide spans 1–19 (MVKYDAVILGSGVLGLSIA). The FAD site is built by Ser11, Leu14, Asp35, Ala46, Ser47, Gly51, and Asn53. Phe57 contributes to the anthranilate binding site. Asn180 carries an N-linked (GlcNAc...) asparagine glycan. Cysteines 214 and 271 form a disulfide. The anthranilate site is built by Tyr229, Tyr246, and Arg296. Tyr229, Tyr246, and Arg296 together coordinate (R)-lactate. The FAD site is built by Arg296, Gly342, Gly345, Tyr346, and Gln347. A Microbody targeting signal motif is present at residues 371–373 (AKL).

It belongs to the DAMOX/DASOX family. The cofactor is FAD.

The protein resides in the peroxisome matrix. The enzyme catalyses a D-alpha-amino acid + O2 + H2O = a 2-oxocarboxylate + H2O2 + NH4(+). Its function is as follows. Catalyzes the oxidative deamination of D-amino acids with broad substrate specificity. Enables the organism to utilize D-amino acids as a source of nutrients. Enables the organism to utilize D-glutamate and D-methionine as a nitrogen source. Protects the organism from the toxicity of D-amino acids, including from D-glutamate. May play a role in its interaction with the host. The sequence is that of D-amino-acid oxidase 3 from Cryptococcus neoformans var. grubii serotype A (strain H99 / ATCC 208821 / CBS 10515 / FGSC 9487) (Filobasidiella neoformans var. grubii).